The following is a 229-amino-acid chain: 2,3-bisphosphoglycerate-dependent phosphoglycerate mutase (229 aa).

Substrate-binding positions include 8–15, 21–22, arginine 60, 87–90, lysine 98, 114–115, and 183–184; these read RHGESAWN, TG, ERHY, RR, and GN. Residue histidine 9 is the Tele-phosphohistidine intermediate of the active site. Glutamate 87 functions as the Proton donor/acceptor in the catalytic mechanism.

The protein belongs to the phosphoglycerate mutase family. BPG-dependent PGAM subfamily. Homodimer.

The catalysed reaction is (2R)-2-phosphoglycerate = (2R)-3-phosphoglycerate. Its pathway is carbohydrate degradation; glycolysis; pyruvate from D-glyceraldehyde 3-phosphate: step 3/5. Its function is as follows. Catalyzes the interconversion of 2-phosphoglycerate and 3-phosphoglycerate. The sequence is that of 2,3-bisphosphoglycerate-dependent phosphoglycerate mutase from Polynucleobacter necessarius subsp. necessarius (strain STIR1).